The chain runs to 486 residues: MTTSMQPSKYTGLVADLMPNIRAMKYSGLFMHNFTGGSAFMKKVYSSVHLVFLLMQFTFILVNMALNAEEVNELSGNTITTLFFTHCITKFIYLAVNQKNFYRTLNIWNQVNTHPLFAESDARYHSIALAKMRKLFFLVMLTTVASATAWTTITFFGDSVKMVVDHETNSSIPVEIPRLPIKSFYPWNASHGMFYMISFAFQIYYVLFSMIHSNLCDVMFCSWLIFACEQLQHLKGIMKPLMELSASLDTYRPNSAALFRSLSANSKSELIHNEEKDPGTDMDMSGIYSSKADWGAQFRAPSTLQSFGGNGGGGNGLVNGANPNGLTKKQEMMVRSAIKYWVERHKHVVRLVAAIGDTYGAALLLHMLTSTIKLTLLAYQATKINGVNVYAFTVVGYLGYALAQVFHFCIFGNRLIEESSSVMEAAYSCHWYDGSEEAKTFVQIVCQQCQKAMSISGAKFFTVSLDLFASVLGAVVTYFMVLVQLK.

The Cytoplasmic segment spans residues 1-47 (MTTSMQPSKYTGLVADLMPNIRAMKYSGLFMHNFTGGSAFMKKVYSS). A helical membrane pass occupies residues 48 to 68 (VHLVFLLMQFTFILVNMALNA). The Extracellular segment spans residues 69–75 (EEVNELS). Residues 76–96 (GNTITTLFFTHCITKFIYLAV) traverse the membrane as a helical segment. Residues 97 to 135 (NQKNFYRTLNIWNQVNTHPLFAESDARYHSIALAKMRKL) lie on the Cytoplasmic side of the membrane. Residues 136 to 156 (FFLVMLTTVASATAWTTITFF) traverse the membrane as a helical segment. Residues 157–191 (GDSVKMVVDHETNSSIPVEIPRLPIKSFYPWNASH) are Extracellular-facing. N169 and N188 each carry an N-linked (GlcNAc...) asparagine glycan. A helical membrane pass occupies residues 192-212 (GMFYMISFAFQIYYVLFSMIH). Over 213–351 (SNLCDVMFCS…VERHKHVVRL (139 aa)) the chain is Cytoplasmic. A helical transmembrane segment spans residues 352-372 (VAAIGDTYGAALLLHMLTSTI). The Extracellular segment spans residues 373-390 (KLTLLAYQATKINGVNVY). A helical membrane pass occupies residues 391 to 411 (AFTVVGYLGYALAQVFHFCIF). Residues 412-462 (GNRLIEESSSVMEAAYSCHWYDGSEEAKTFVQIVCQQCQKAMSISGAKFFT) are Cytoplasmic-facing. A helical transmembrane segment spans residues 463-483 (VSLDLFASVLGAVVTYFMVLV). Residues 484 to 486 (QLK) lie on the Extracellular side of the membrane.

This sequence belongs to the insect chemoreceptor superfamily. Heteromeric odorant receptor channel (TC 1.A.69) family. Orco subfamily. As to quaternary structure, heterodimer with conventional odorant receptors (ORs). Complexes exist early in the endomembrane system in olfactory sensory neurons (OSNs), coupling these complexes to the conserved ciliary trafficking pathway. As to expression, expression is restricted to olfactory sensory neurons (OSNs). Coexpressed with Snmp in a lateral-distal population of OSNs. Expressed in the embryonic antennal-maxillary complex, in all 21 OSNs of the larval dorsal organ, in the pupal antennal OSNs, in all 120 adult maxillary palp neurons and in approximately 70-80% of adult antennal OSNs, where expression is highest at the dorsal-medial edge. Localized to OSN cell bodies and to the distal portion of ciliated OSN dendrites.

It localises to the cell membrane. Its function is as follows. Odorant coreceptor which complexes with conventional odorant receptors (ORs) to form odorant-sensing units, providing sensitive and prolonged odorant signaling and calcium permeability. Orco is a universal and integral part of the functional odorant receptor, involved in the dendritic localization of other olfactory receptors. Expression of Orco alone leads to formation of rapid and transient ion channels not directly responding to odorants, but directly activated by intracellular cAMP or cGMP. Snmp, Or67d and lush act in concert to capture fatty-acid-derived male pheromone 11-cis vaccenyl acetate (cVA) molecules on the surface of Or67d expressing olfactory dendrites and facilitate their transfer to the odorant-receptor Orco complex. This Drosophila melanogaster (Fruit fly) protein is Odorant receptor coreceptor (Orco).